The primary structure comprises 157 residues: Phosphopantetheine adenylyltransferase (157 aa).

Threonine 10 provides a ligand contact to substrate. Residues 10–11 and histidine 18 contribute to the ATP site; that span reads TF. Substrate is bound by residues lysine 42, leucine 74, and arginine 88. ATP-binding positions include 89–91, glutamate 99, and 124–130; these read GLR and NAFISSS.

Belongs to the bacterial CoaD family. As to quaternary structure, homohexamer. Mg(2+) is required as a cofactor.

It is found in the cytoplasm. The catalysed reaction is (R)-4'-phosphopantetheine + ATP + H(+) = 3'-dephospho-CoA + diphosphate. The protein operates within cofactor biosynthesis; coenzyme A biosynthesis; CoA from (R)-pantothenate: step 4/5. Functionally, reversibly transfers an adenylyl group from ATP to 4'-phosphopantetheine, yielding dephospho-CoA (dPCoA) and pyrophosphate. This is Phosphopantetheine adenylyltransferase from Helicobacter pylori (strain J99 / ATCC 700824) (Campylobacter pylori J99).